A 226-amino-acid chain; its full sequence is Large ribosomal subunit protein uL3 (226 aa).

The disordered stretch occupies residues N136–P162. Polar residues predominate over residues F137 to M158. An N5-methylglutamine modification is found at Q160.

The protein belongs to the universal ribosomal protein uL3 family. As to quaternary structure, part of the 50S ribosomal subunit. Forms a cluster with proteins L14 and L19. In terms of processing, methylated by PrmB.

In terms of biological role, one of the primary rRNA binding proteins, it binds directly near the 3'-end of the 23S rRNA, where it nucleates assembly of the 50S subunit. The sequence is that of Large ribosomal subunit protein uL3 from Methylibium petroleiphilum (strain ATCC BAA-1232 / LMG 22953 / PM1).